A 479-amino-acid polypeptide reads, in one-letter code: Sulfate adenylyltransferase subunit 1 (479 aa).

The tr-type G domain maps to 25 to 239 (KSLLRFLTCG…EVLETVDIQR (215 aa)). The interval 34 to 41 (GSVDDGKS) is G1. 34 to 41 (GSVDDGKS) contacts GTP. Residues 92-96 (GITID) form a G2 region. The interval 113-116 (DTPG) is G3. GTP-binding positions include 113–117 (DTPGH) and 168–171 (NKMD). The segment at 168–171 (NKMD) is G4. A G5 region spans residues 206-208 (SAL).

This sequence belongs to the TRAFAC class translation factor GTPase superfamily. Classic translation factor GTPase family. CysN/NodQ subfamily. In terms of assembly, heterodimer composed of CysD, the smaller subunit, and CysN.

It catalyses the reaction sulfate + ATP + H(+) = adenosine 5'-phosphosulfate + diphosphate. Its pathway is sulfur metabolism; hydrogen sulfide biosynthesis; sulfite from sulfate: step 1/3. With CysD forms the ATP sulfurylase (ATPS) that catalyzes the adenylation of sulfate producing adenosine 5'-phosphosulfate (APS) and diphosphate, the first enzymatic step in sulfur assimilation pathway. APS synthesis involves the formation of a high-energy phosphoric-sulfuric acid anhydride bond driven by GTP hydrolysis by CysN coupled to ATP hydrolysis by CysD. The polypeptide is Sulfate adenylyltransferase subunit 1 (Salmonella choleraesuis (strain SC-B67)).